The primary structure comprises 865 residues: V-type proton ATPase 116 kDa subunit a 3 (865 aa).

Residues 1–409 are Cytoplasmic-facing; that stretch reads MGSIYRSEHM…VNPAPWTIIS (409 aa). Positions 51–121 form a coiled coil; it reads FVNEVRRCDE…NKNCKVLKNN (71 aa). Residues 410-430 form a helical membrane-spanning segment; that stretch reads FPFLFAVMFGDAGHGIIMLIA. Residues 431–453 lie on the Extracellular side of the membrane; the sequence is ASAFVIFEKKLISMKIKDEIFNT. Residues 454 to 474 traverse the membrane as a helical segment; that stretch reads FFGGRYVVLLMGMFAIYTGFI. At 475–556 the chain is on the cytoplasmic side; sequence YNDFYSKSVN…FLNPMKMKTS (82 aa). The chain crosses the membrane as a helical span at residues 557–577; sequence ILLGISQMAFGIMLSLMNHIG. N-linked (GlcNAc...) asparagine glycosylation occurs at Asn578. Residues 578–583 are Extracellular-facing; sequence NRSVVD. The chain crosses the membrane as a helical span at residues 584–604; that stretch reads IVFVFIPQCLFLGCIFVYLCL. At 605–623 the chain is on the cytoplasmic side; the sequence is QVLMKWIFFYVKPAYIFGR. A helical transmembrane segment spans residues 624–644; that stretch reads LYPGSNCAPSLLIGLINMFMV. Topologically, residues 645–688 are extracellular; the sequence is KSRDASFAHDVGTAAGKEWVIVNGQNVTYTINDQCYLQQWYPNQ. Asn670 and Asn687 each carry an N-linked (GlcNAc...) asparagine glycan. The helical transmembrane segment at 689 to 709 threads the bilayer; that stretch reads SLVELILLLIAVVSVPVMLLV. The Cytoplasmic segment spans residues 710–798; it reads KPFYIRWRHS…LTMGGWGGSA (89 aa). Residues 799-819 form a helical membrane-spanning segment; sequence AITILFYFIFSILSVCILILM. Residues 820 to 865 lie on the Extracellular side of the membrane; that stretch reads EGLSAFLHAIRLHWVEFQSKFYGGTGIQFEPFCFTKIIRVYEGLDQ.

It belongs to the V-ATPase 116 kDa subunit family. In terms of assembly, V-ATPase is a heteromultimeric enzyme made up of two complexes: the ATP-hydrolytic V1 complex and the proton translocation V0 complex. The V1 complex consists of three catalytic AB heterodimers that form a heterohexamer, three peripheral stalks each consisting of EG heterodimers, one central rotor including subunits D and F, and the regulatory subunits C and H. The proton translocation complex V0 consists of the proton transport subunit a, a ring of proteolipid subunits c9c'', rotary subunit d, subunits e and f, and the accessory subunits vah-19/Ac45 and vah-20/PRR. Interacts with V-type proton ATPase subunit C vha-11.

The protein resides in the apical cell membrane. Its function is as follows. Subunit of the V0 complex of vacuolar(H+)-ATPase (V-ATPase), a multisubunit enzyme composed of a peripheral complex (V1) that hydrolyzes ATP and a membrane integral complex (V0) that translocates protons. V-ATPase is responsible for acidifying and maintaining the pH of intracellular compartments and in some cell types, is targeted to the plasma membrane, where it is responsible for acidifying the extracellular environment. In the intestine, required for the rhythmic defecation behavior by promoting acidification in the gut lumen following defecation. Also, luminal acidification is required for nutrient uptake. This is V-type proton ATPase 116 kDa subunit a 3 from Caenorhabditis elegans.